A 330-amino-acid polypeptide reads, in one-letter code: Erlin-2-B (330 aa).

Over Met1–Ser2 the chain is Cytoplasmic. Residues His3–Ile23 traverse the membrane as a helical segment. The Lumenal portion of the chain corresponds to His24–Lys330. Asn106 is a glycosylation site (N-linked (GlcNAc...) asparagine). The disordered stretch occupies residues Ser308–Lys330. A compositionally biased stretch (basic and acidic residues) spans Lys319–Lys330.

Belongs to the band 7/mec-2 family.

It localises to the endoplasmic reticulum membrane. Functionally, mediates the endoplasmic reticulum-associated degradation (ERAD) of inositol 1,4,5-trisphosphate receptors (IP3Rs). Promotes sterol-accelerated ERAD of HMGCR. Involved in regulation of cellular cholesterol homeostasis by regulation the SREBP signaling pathway. The polypeptide is Erlin-2-B (erlin2-b) (Xenopus laevis (African clawed frog)).